The chain runs to 432 residues: ATP-dependent RNA helicase RhlB (432 aa).

Positions 9–37 match the Q motif motif; sequence KKFSDFALHPKVIEALEKKGFSNCTQIQA. The 180-residue stretch at 40 to 219 folds into the Helicase ATP-binding domain; sequence LPITVKGHDI…FEQMNNPEYV (180 aa). 53–60 contributes to the ATP binding site; sequence AQTGTGKT. Positions 165–168 match the DEAD box motif; sequence DEAD. Residues 245-390 enclose the Helicase C-terminal domain; sequence RLLQTLIEEE…VSKYNSDALL (146 aa). Positions 393-432 are disordered; that stretch reads LPEPKRRHRPRQGQPRRNNSAPRRGNNTQRNNRNKRPSHS. A compositionally biased stretch (low complexity) spans 404-423; it reads QGQPRRNNSAPRRGNNTQRN.

The protein belongs to the DEAD box helicase family. RhlB subfamily. In terms of assembly, component of the RNA degradosome, which is a multiprotein complex involved in RNA processing and mRNA degradation.

It localises to the cytoplasm. It catalyses the reaction ATP + H2O = ADP + phosphate + H(+). In terms of biological role, DEAD-box RNA helicase involved in RNA degradation. Has RNA-dependent ATPase activity and unwinds double-stranded RNA. The polypeptide is ATP-dependent RNA helicase RhlB (Proteus mirabilis (strain HI4320)).